The sequence spans 166 residues: MEAGPHPRPGHCCKPGGRLDMNHGFVHHIRRNQIARDDYDKKVKQAAKEKVRRRHTPAPTRPRKPDLQVYLPRHRDVSAHPRNPDYEESGESSSSGGSELEPSGHQLFCLEYEADSGEVTSVIVYQGDDPGKVSEKVSAHTPLDPPMREALKLRIQEEIAKRQSQH.

Residues 32 to 107 form a disordered region; the sequence is NQIARDDYDK…SELEPSGHQL (76 aa). 2 stretches are compositionally biased toward basic and acidic residues: residues 34 to 49 and 73 to 85; these read IARD…AAKE and RHRD…RNPD. Positions 91–104 are enriched in low complexity; the sequence is ESSSSGGSELEPSG.

The protein belongs to the UPF0561 family.

This chain is UPF0561 protein C2orf68 (C2orf68), found in Homo sapiens (Human).